Reading from the N-terminus, the 617-residue chain is Protein AsmA (617 aa).

At 1–3 (MRR) the chain is on the cytoplasmic side. The helical transmembrane segment at 4–24 (FLTTLMILLVVLVAGLSALVL) threads the bilayer. Over 25 to 617 (LVNPNDFRDY…KDVKKLLEKM (593 aa)) the chain is Periplasmic. Positions 302 to 319 (TANGENGAAQQGQSQSTL) are enriched in polar residues. Residues 302-321 (TANGENGAAQQGQSQSTLPR) are disordered.

It belongs to the AsmA family.

Its subcellular location is the cell inner membrane. Could be involved in the assembly of outer membrane proteins. May indirectly influence the assembly of outer membrane proteins, potentially by altering outer membrane fluidity. Inhibits the assembly of mutant forms of outer membrane protein F (OmpF). This Escherichia coli (strain K12) protein is Protein AsmA.